The following is a 160-amino-acid chain: DNA polymerase delta subunit 4 (160 aa).

Residues 1–48 (MKKRTTQAKKSGQNTNIRDVFPHVVRSNSSQSHIGKKVSSEQSPTPDV) form a disordered region. Residues 8 to 17 (AKKSGQNTNI) show a composition bias toward polar residues.

It belongs to the DNA polymerase delta subunit 4 family. Heterotetramer that consist of the pol3, cdc1, cdc27 and cdm1 subunits. Interacts with cdc1 and pol3.

The protein resides in the nucleus. Appears to have a role in the stabilization of the DNA polymerase delta complex. In Schizosaccharomyces pombe (strain 972 / ATCC 24843) (Fission yeast), this protein is DNA polymerase delta subunit 4 (cdm1).